The chain runs to 160 residues: MLLLLLGILFLHIAVLVLLFVSTIVSQWLVGNGHRTDLWQNCTTSALGAVQHCYSSSVSEWLQSVQATMILSVIFSVLSLFLFFCQLFTLTKGGRFYITGVFQILAGLCVMSAAAIYTVRHSEWHVNNDYSYGFAYILAWVAFPLALLSGIIYVILRKRE.

Residue Met-1 is a topological domain, cytoplasmic. The helical transmembrane segment at 2-31 (LLLLLGILFLHIAVLVLLFVSTIVSQWLVG) threads the bilayer. The Extracellular portion of the chain corresponds to 32–64 (NGHRTDLWQNCTTSALGAVQHCYSSSVSEWLQS). Asn-41 is a glycosylation site (N-linked (GlcNAc...) asparagine). Residues 65-91 (VQATMILSVIFSVLSLFLFFCQLFTLT) traverse the membrane as a helical segment. Residues 92–95 (KGGR) are Cytoplasmic-facing. The helical transmembrane segment at 96–119 (FYITGVFQILAGLCVMSAAAIYTV) threads the bilayer. At 120-133 (RHSEWHVNNDYSYG) the chain is on the extracellular side. Residues 134 to 156 (FAYILAWVAFPLALLSGIIYVIL) form a helical membrane-spanning segment. Residues 157–160 (RKRE) lie on the Cytoplasmic side of the membrane.

It belongs to the PMP-22/EMP/MP20 family. Post-translationally, ubiquitinated by the DCX(DCAF13) E3 ubiquitin ligase complex, leading to its degradation. As to expression, found exclusively in the peripheral nervous system. Present in both myelinating and nonmyelinating Schwann cells. Found in the tumors of Schwann cell lineage where axons are present (neurofibromas) but not where axons are absent (schwannomas).

The protein localises to the cell membrane. Functionally, might be involved in growth regulation, and in myelinization in the peripheral nervous system. The sequence is that of Peripheral myelin protein 22 (Pmp22) from Rattus norvegicus (Rat).